Reading from the N-terminus, the 455-residue chain is uncharacterized protein (455 aa).

Asparagine 42, asparagine 49, and asparagine 70 each carry an N-linked (GlcNAc...) asparagine glycan. Helical transmembrane passes span 127–147 (AILISFGLIIGALLYLYTWIF), 153–173 (SLLDWMFISCSGIIHQFMFRI), 177–197 (ICALVLIGFWLLCCLVIITYY), and 377–397 (YKFCFIFYGIAIIVFILEIIF). Asparagine 403 is a glycosylation site (N-linked (GlcNAc...) asparagine).

Its subcellular location is the membrane. This is an uncharacterized protein from Caenorhabditis elegans.